A 94-amino-acid polypeptide reads, in one-letter code: Ribonuclease P protein component 1 (94 aa).

It belongs to the eukaryotic/archaeal RNase P protein component 1 family. Consists of a catalytic RNA component and at least 4-5 protein subunits.

It localises to the cytoplasm. It carries out the reaction Endonucleolytic cleavage of RNA, removing 5'-extranucleotides from tRNA precursor.. Functionally, part of ribonuclease P, a protein complex that generates mature tRNA molecules by cleaving their 5'-ends. The protein is Ribonuclease P protein component 1 of Thermofilum pendens (strain DSM 2475 / Hrk 5).